The chain runs to 384 residues: Dual-specificity RNA methyltransferase RlmN (384 aa).

Glu105 acts as the Proton acceptor in catalysis. A Radical SAM core domain is found at 111-350 (EDDRATLCVS…TIVRKTRGDD (240 aa)). A disulfide bridge connects residues Cys118 and Cys355. The [4Fe-4S] cluster site is built by Cys125, Cys129, and Cys132. S-adenosyl-L-methionine is bound by residues 179-180 (GE), Ser211, 233-235 (SLH), and Asn312. The S-methylcysteine intermediate role is filled by Cys355.

It belongs to the radical SAM superfamily. RlmN family. The cofactor is [4Fe-4S] cluster.

Its subcellular location is the cytoplasm. It catalyses the reaction adenosine(2503) in 23S rRNA + 2 reduced [2Fe-2S]-[ferredoxin] + 2 S-adenosyl-L-methionine = 2-methyladenosine(2503) in 23S rRNA + 5'-deoxyadenosine + L-methionine + 2 oxidized [2Fe-2S]-[ferredoxin] + S-adenosyl-L-homocysteine. It carries out the reaction adenosine(37) in tRNA + 2 reduced [2Fe-2S]-[ferredoxin] + 2 S-adenosyl-L-methionine = 2-methyladenosine(37) in tRNA + 5'-deoxyadenosine + L-methionine + 2 oxidized [2Fe-2S]-[ferredoxin] + S-adenosyl-L-homocysteine. Functionally, specifically methylates position 2 of adenine 2503 in 23S rRNA and position 2 of adenine 37 in tRNAs. m2A2503 modification seems to play a crucial role in the proofreading step occurring at the peptidyl transferase center and thus would serve to optimize ribosomal fidelity. The polypeptide is Dual-specificity RNA methyltransferase RlmN (Escherichia coli O6:H1 (strain CFT073 / ATCC 700928 / UPEC)).